We begin with the raw amino-acid sequence, 115 residues long: Virion-associated protein (115 aa).

2 coiled-coil regions span residues M1–R28 and K33–Q54. Over residues G96–P106 the composition is skewed to polar residues. Residues G96–K115 are disordered.

It belongs to the caulimovirus ORF III family. In terms of assembly, homotetramer, through coiled-coil domain. Homotrimer when interacts with icosehadral capsid. Interacts with capsid protein, and with Movement protein.

The protein resides in the virion. It localises to the host cell junction. The protein localises to the host plasmodesma. Its function is as follows. Plays a role in virus cell-to-cell and plant-to-plant transmission. Interacts with virion icosahedral capsid and movement protein, thereby facilitating virion cell-to-cell transmission through plasmodesmata opened by viral movement protein. Also interacts with aphid transmission factor, attaching the virion to aphid stylet when the animal feeds on an virus infected plant. Aphid saliva may later detach the virion, inducing release of infectious particles when the animal feeds on a new plant. In Scrophularia californica (California bee plant), this protein is Virion-associated protein.